A 319-amino-acid polypeptide reads, in one-letter code: Cytochrome c biogenesis protein CcsA (319 aa).

8 consecutive transmembrane segments (helical) span residues 15–35 (FSIV…NKIV), 44–64 (GMIL…IFAG), 71–91 (LYES…IPYF), 96–116 (LSAI…SGFF), 141–161 (MILA…LLVI), 223–243 (VISL…VWAN), 258–278 (WAFI…NINL), and 284–304 (AIVA…VNLL).

This sequence belongs to the CcmF/CycK/Ccl1/NrfE/CcsA family. May interact with Ccs1.

The protein resides in the plastid. Its subcellular location is the chloroplast thylakoid membrane. In terms of biological role, required during biogenesis of c-type cytochromes (cytochrome c6 and cytochrome f) at the step of heme attachment. This Fagopyrum esculentum subsp. ancestrale (Wild buckwheat) protein is Cytochrome c biogenesis protein CcsA.